The following is a 301-amino-acid chain: D-psicose 3-epimerase (301 aa).

Tyr-16 contacts substrate. Glu-162 functions as the Proton donor/acceptor in the catalytic mechanism. Glu-162 is a binding site for Mn(2+). Substrate-binding positions include Glu-168 and 195 to 198 (DTFH). Residues Asp-195 and His-221 each coordinate Mn(2+). Substrate is bound at residue Arg-227. Glu-256 serves as the catalytic Proton donor/acceptor. Mn(2+) is bound at residue Glu-256.

Belongs to the hyi family. In terms of assembly, homotetramer. Mn(2+) serves as cofactor. The cofactor is Co(2+).

It carries out the reaction D-allulose = keto-D-fructose. Completely inhibited by EDTA and partially inhibited by Zn(2+), Mg(2+) and Cu(2+). In terms of biological role, involved in the biosynthesis of D-psicose. Catalyzes the reversible epimerization of D-fructose at the C3 position to yield D-psicose. The enzyme is highly specific for D-psicose and shows very low activity with D-tagatose. This Enterocloster bolteae (strain ATCC BAA-613 / DSM 15670 / CCUG 46953 / JCM 12243 / WAL 16351) (Clostridium bolteae) protein is D-psicose 3-epimerase.